The chain runs to 184 residues: Peptidyl-tRNA hydrolase (184 aa).

Residue tyrosine 14 participates in tRNA binding. The Proton acceptor role is filled by histidine 19. Residues phenylalanine 64, asparagine 66, and asparagine 112 each coordinate tRNA.

This sequence belongs to the PTH family. Monomer.

The protein resides in the cytoplasm. The enzyme catalyses an N-acyl-L-alpha-aminoacyl-tRNA + H2O = an N-acyl-L-amino acid + a tRNA + H(+). Functionally, hydrolyzes ribosome-free peptidyl-tRNAs (with 1 or more amino acids incorporated), which drop off the ribosome during protein synthesis, or as a result of ribosome stalling. Catalyzes the release of premature peptidyl moieties from peptidyl-tRNA molecules trapped in stalled 50S ribosomal subunits, and thus maintains levels of free tRNAs and 50S ribosomes. This Thermoanaerobacter sp. (strain X514) protein is Peptidyl-tRNA hydrolase.